Reading from the N-terminus, the 330-residue chain is Ribosomal RNA small subunit methyltransferase C (330 aa).

Belongs to the methyltransferase superfamily. RsmC family. Monomer.

Its subcellular location is the cytoplasm. The enzyme catalyses guanosine(1207) in 16S rRNA + S-adenosyl-L-methionine = N(2)-methylguanosine(1207) in 16S rRNA + S-adenosyl-L-homocysteine + H(+). In terms of biological role, specifically methylates the guanine in position 1207 of 16S rRNA in the 30S particle. In Haemophilus influenzae (strain PittGG), this protein is Ribosomal RNA small subunit methyltransferase C.